The sequence spans 177 residues: Probable DNA-directed RNA polymerase subunit delta (177 aa).

Residues 14–83 (LSMIEVARAI…GENKWGLRSW (70 aa)) enclose the HTH HARE-type domain. Acidic residues-rich tracts occupy residues 117-134 (GDDD…DEDN) and 142-157 (EYDD…EVES). The tract at residues 117-164 (GDDDAIDYGHDDPEDEDNYPGSVSSEYDDENPDDEKDEVESYDQKSTK) is disordered.

This sequence belongs to the RpoE family. RNAP is composed of a core of 2 alpha, a beta and a beta' subunits. The core is associated with a delta subunit and one of several sigma factors.

Functionally, participates in both the initiation and recycling phases of transcription. In the presence of the delta subunit, RNAP displays an increased specificity of transcription, a decreased affinity for nucleic acids, and an increased efficiency of RNA synthesis because of enhanced recycling. The sequence is that of Probable DNA-directed RNA polymerase subunit delta from Streptococcus suis (strain 98HAH33).